Consider the following 325-residue polypeptide: Solute-binding protein RD1_1052 (325 aa).

The N-terminal stretch at 1–26 (MRLFTKIKGLAAVTCVAALASSAAFA) is a signal peptide. D-mannonate-binding positions include glutamate 75, 93 to 95 (GES), 148 to 151 (RGPR), arginine 171, and asparagine 211. L-galactonate contacts are provided by residues glutamate 75, 93–95 (GES), 148–151 (RGPR), arginine 171, and asparagine 211.

Belongs to the bacterial solute-binding protein 7 family. As to quaternary structure, the complex is comprised of an extracytoplasmic solute-binding protein and a heteromeric permease formed by two transmembrane proteins.

The protein resides in the periplasm. In terms of biological role, solute-binding protein that binds L-galactonate and D-mannonate (in vitro). Probably part of a tripartite ATP-independent periplasmic (TRAP) transport system that mediates solute transport into the cytoplasm. The protein is Solute-binding protein RD1_1052 of Roseobacter denitrificans (strain ATCC 33942 / OCh 114) (Erythrobacter sp. (strain OCh 114)).